The following is a 296-amino-acid chain: uncharacterized protein (296 aa).

A helical membrane pass occupies residues 7–26 (CFSLVCALGASTYLLWRGWL).

The protein localises to the membrane. This is an uncharacterized protein from Treponema pallidum (strain Nichols).